The chain runs to 773 residues: Pentatricopeptide repeat-containing protein At1g76280 (773 aa).

PPR repeat units follow at residues 130-165 (DSRSLLFIVKSLCNGGHLDKASEFIHAVREDDRISP), 166-200 (LLPIYNFFLGACARTRSVYHASKCLELMDQRRVGK), 201-231 (NGITYVALLKLAVFQRNLSTVNDIWKHYVNH), 235-269 (DILSLRRFIWSFTRLGDLKSAYELLQHMVYLALRG), 332-369 (LRWSFNDVIHACGQSKNSELAEQLMLQLKVMQQQNLKP), 370-400 (YDSTLATVAAYCSKALQVDLAEHLLDQISEC), 402-436 (YSYPFNNLLAAYDSLDQPERAVRVLARMKELKLRP), 524-558 (GTPTYNIVLHSLLEANETDMVINIFKRMKSCGCPA), 559-593 (DVATYNIMIDCCSLIHSYKSACALVSMMIRDGFSP), 594-628 (KAVTFTALMKILLNDANFEEALNLLDQAALEEIHL), and 629-663 (DVLSYNTILRKAFEKGMIDVIEYIVEQMHREKVNP).

The protein belongs to the PPR family. P subfamily.

The sequence is that of Pentatricopeptide repeat-containing protein At1g76280 from Arabidopsis thaliana (Mouse-ear cress).